The chain runs to 166 residues: Large ribosomal subunit protein uL10 (166 aa).

This sequence belongs to the universal ribosomal protein uL10 family. As to quaternary structure, part of the ribosomal stalk of the 50S ribosomal subunit. The N-terminus interacts with L11 and the large rRNA to form the base of the stalk. The C-terminus forms an elongated spine to which L12 dimers bind in a sequential fashion forming a multimeric L10(L12)X complex.

Functionally, forms part of the ribosomal stalk, playing a central role in the interaction of the ribosome with GTP-bound translation factors. In Pseudomonas paraeruginosa (strain DSM 24068 / PA7) (Pseudomonas aeruginosa (strain PA7)), this protein is Large ribosomal subunit protein uL10.